A 161-amino-acid chain; its full sequence is Inner membrane assembly complex subunit 17 (161 aa).

The N-terminal 22 residues, 1 to 22 (MLNPRPCVPRLLSAVARCHKPY), are a transit peptide targeting the mitochondrion. Residues 23 to 84 (STSIKSLEDL…QQQQQALKKF (62 aa)) lie on the Mitochondrial matrix side of the membrane. The helical transmembrane segment at 85–107 (VRPMWIFLLMSSFFYLTGHYIWW) threads the bilayer. Residues 108-161 (KLEYDEREIELHKQVQALRQELDSAIAAKHSGKEPALSGAGAKKPKRWYLAWLW) lie on the Mitochondrial intermembrane side of the membrane. Residues 109–138 (LEYDEREIELHKQVQALRQELDSAIAAKHS) are a coiled coil.

Belongs to the INA17 family. Component of the inner membrane assembly (INA) complex, composed of INA17 and INA22. Interacts with a subset of F(1)F(0)-ATP synthase subunits of the F(1)-domain and the peripheral stalk.

The protein localises to the mitochondrion inner membrane. In terms of biological role, component of the INA complex (INAC) that promotes the biogenesis of mitochondrial F(1)F(0)-ATP synthase. INAC facilitates the assembly of the peripheral stalk and promotes the assembly of the catalytic F(1)-domain with the membrane-embedded F(0)-domain. This Lachancea thermotolerans (strain ATCC 56472 / CBS 6340 / NRRL Y-8284) (Yeast) protein is Inner membrane assembly complex subunit 17.